The primary structure comprises 364 residues: Phosphoserine aminotransferase (364 aa).

Arg41 is a binding site for L-glutamate. Residues 75-76, Trp100, Thr155, Asp175, and Gln198 each bind pyridoxal 5'-phosphate; that span reads AS. Lys199 is modified (N6-(pyridoxal phosphate)lysine). 239–240 is a binding site for pyridoxal 5'-phosphate; sequence NT.

The protein belongs to the class-V pyridoxal-phosphate-dependent aminotransferase family. SerC subfamily. Homodimer. Pyridoxal 5'-phosphate serves as cofactor.

The protein localises to the cytoplasm. The enzyme catalyses O-phospho-L-serine + 2-oxoglutarate = 3-phosphooxypyruvate + L-glutamate. It catalyses the reaction 4-(phosphooxy)-L-threonine + 2-oxoglutarate = (R)-3-hydroxy-2-oxo-4-phosphooxybutanoate + L-glutamate. The protein operates within amino-acid biosynthesis; L-serine biosynthesis; L-serine from 3-phospho-D-glycerate: step 2/3. Catalyzes the reversible conversion of 3-phosphohydroxypyruvate to phosphoserine and of 3-hydroxy-2-oxo-4-phosphonooxybutanoate to phosphohydroxythreonine. The polypeptide is Phosphoserine aminotransferase (Streptococcus thermophilus (strain CNRZ 1066)).